A 251-amino-acid polypeptide reads, in one-letter code: 5'-nucleotidase SurE (251 aa).

A divalent metal cation is bound by residues Asp-8, Asp-9, Ser-42, and Asn-94.

Belongs to the SurE nucleotidase family. A divalent metal cation serves as cofactor.

The protein localises to the cytoplasm. The enzyme catalyses a ribonucleoside 5'-phosphate + H2O = a ribonucleoside + phosphate. Functionally, nucleotidase that shows phosphatase activity on nucleoside 5'-monophosphates. This is 5'-nucleotidase SurE from Hydrogenovibrio crunogenus (strain DSM 25203 / XCL-2) (Thiomicrospira crunogena).